Reading from the N-terminus, the 244-residue chain is Phosphoadenosine 5'-phosphosulfate reductase (244 aa).

Cys239 functions as the Nucleophile; cysteine thiosulfonate intermediate in the catalytic mechanism.

Belongs to the PAPS reductase family. CysH subfamily.

It localises to the cytoplasm. It carries out the reaction [thioredoxin]-disulfide + sulfite + adenosine 3',5'-bisphosphate + 2 H(+) = [thioredoxin]-dithiol + 3'-phosphoadenylyl sulfate. The protein operates within sulfur metabolism; hydrogen sulfide biosynthesis; sulfite from sulfate: step 3/3. Its function is as follows. Catalyzes the formation of sulfite from phosphoadenosine 5'-phosphosulfate (PAPS) using thioredoxin as an electron donor. The sequence is that of Phosphoadenosine 5'-phosphosulfate reductase from Shigella dysenteriae serotype 1 (strain Sd197).